The chain runs to 91 residues: PqqA binding protein (91 aa).

This sequence belongs to the PqqD family. Monomer. Interacts with PqqE.

The protein operates within cofactor biosynthesis; pyrroloquinoline quinone biosynthesis. Its function is as follows. Functions as a PqqA binding protein and presents PqqA to PqqE, in the pyrroloquinoline quinone (PQQ) biosynthetic pathway. The polypeptide is PqqA binding protein (Pseudomonas fluorescens (strain ATCC BAA-477 / NRRL B-23932 / Pf-5)).